A 52-amino-acid chain; its full sequence is Large ribosomal subunit protein bL33 (52 aa).

The protein belongs to the bacterial ribosomal protein bL33 family.

The chain is Large ribosomal subunit protein bL33 from Campylobacter jejuni subsp. doylei (strain ATCC BAA-1458 / RM4099 / 269.97).